A 294-amino-acid polypeptide reads, in one-letter code: NAD kinase (294 aa).

Asp73 (proton acceptor) is an active-site residue. NAD(+)-binding positions include 73–74, 147–148, Arg175, Asp177, and 188–193; these read DG, ND, and TAYALS.

Belongs to the NAD kinase family. A divalent metal cation is required as a cofactor.

It is found in the cytoplasm. The catalysed reaction is NAD(+) + ATP = ADP + NADP(+) + H(+). In terms of biological role, involved in the regulation of the intracellular balance of NAD and NADP, and is a key enzyme in the biosynthesis of NADP. Catalyzes specifically the phosphorylation on 2'-hydroxyl of the adenosine moiety of NAD to yield NADP. The chain is NAD kinase from Nitrosospira multiformis (strain ATCC 25196 / NCIMB 11849 / C 71).